A 493-amino-acid polypeptide reads, in one-letter code: Phospholipid transfer protein (493 aa).

The first 17 residues, 1–17 (MVLLWALFLALLAGAHA), serve as a signal peptide directing secretion. Asparagine 64, asparagine 91, asparagine 94, asparagine 117, and asparagine 143 each carry an N-linked (GlcNAc...) asparagine glycan. A disulfide bond links cysteine 146 and cysteine 185. N-linked (GlcNAc...) asparagine glycosylation is found at asparagine 245 and asparagine 398.

This sequence belongs to the BPI/LBP/Plunc superfamily. BPI/LBP family. Post-translationally, glycosylation is necessary for secretion and its phospholipid transfer activity. In terms of tissue distribution, highest level expression in the lung, brain and heart with relatively low levels in the liver, skeletal muscle and testis and very low levels found in the spleen and kidney.

The protein resides in the secreted. It localises to the nucleus. It carries out the reaction a 1,2-diacyl-sn-glycero-3-phosphocholine(in) = a 1,2-diacyl-sn-glycero-3-phosphocholine(out). The catalysed reaction is a 1,2-diacyl-sn-glycero-3-phosphoethanolamine(in) = a 1,2-diacyl-sn-glycero-3-phosphoethanolamine(out). The enzyme catalyses a 1,2-diacyl-sn-glycerol(in) = a 1,2-diacyl-sn-glycerol(out). It catalyses the reaction a 1,2-diacyl-sn-glycero-3-phosphate(in) = a 1,2-diacyl-sn-glycero-3-phosphate(out). It carries out the reaction a sphingomyelin(in) = a sphingomyelin(out). The catalysed reaction is a 1,2-diacyl-sn-glycero-3-phospho-(1'-sn-glycerol)(in) = a 1,2-diacyl-sn-glycero-3-phospho-(1'-sn-glycerol)(out). The enzyme catalyses a 1,2-diacyl-sn-glycero-3-phospho-(1D-myo-inositol)(in) = a 1,2-diacyl-sn-glycero-3-phospho-(1D-myo-inositol)(out). It catalyses the reaction 1-hexadecanoyl-2-(5Z,8Z,11Z,14Z-eicosatetraenoyl)-sn-glycero-3-phosphoethanolamine(in) = 1-hexadecanoyl-2-(5Z,8Z,11Z,14Z-eicosatetraenoyl)-sn-glycero-3-phosphoethanolamine(out). It carries out the reaction N-(hexadecanoyl)-sphing-4-enine-1-phosphocholine(in) = N-(hexadecanoyl)-sphing-4-enine-1-phosphocholine(out). The catalysed reaction is 1,2-dihexadecanoyl-sn-glycero-3-phosphocholine(in) = 1,2-dihexadecanoyl-sn-glycero-3-phosphocholine(out). Functionally, mediates the transfer of phospholipids and free cholesterol from triglyceride-rich lipoproteins (low density lipoproteins or LDL and very low density lipoproteins or VLDL) into high-density lipoproteins (HDL) as well as the exchange of phospholipids between triglyceride-rich lipoproteins themselves. Facilitates the transfer of a spectrum of different lipid molecules, including sphingomyelin, phosphatidylcholine, phosphatidylinositol, phosphatidylglycerol, and phosphatidyl ethanolamine. Plays an important role in HDL remodeling which involves modulating the size and composition of HDL. Also plays a key role in the uptake of cholesterol from peripheral cells and tissues that is subsequently transported to the liver for degradation and excretion. Two distinct forms of PLTP exist in plasma: an active form that can transfer phosphatidylcholine from phospholipid vesicles to HDL, and an inactive form that lacks this capability. The polypeptide is Phospholipid transfer protein (Pltp) (Mus musculus (Mouse)).